The primary structure comprises 425 residues: Inhibin beta A chain (425 aa).

An N-terminal signal peptide occupies residues 1–20 (MPLLWLRGFLLASCWIIVRS). Positions 21-309 (SPTPGSEGHS…EDHPHRRRRR (289 aa)) are excised as a propeptide. The N-linked (GlcNAc...) asparagine glycan is linked to Asn-165. Positions 259-289 (KKKKKEEEGEGKKRDGEGGAGGDEEKEQSHR) are disordered. Positions 263 to 275 (KEEEGEGKKRDGE) are enriched in basic and acidic residues. Intrachain disulfides connect Cys-313–Cys-321, Cys-320–Cys-390, Cys-349–Cys-422, and Cys-353–Cys-424.

This sequence belongs to the TGF-beta family. In terms of assembly, dimeric, linked by one or more disulfide bonds. Inhibin A is a dimer of alpha/INHA and beta-A/INHBA. Activin A is a homodimer of beta-A/INHBA. Activin AB is a dimer of beta-A/INHBA and beta-B/INHBB. Interacts with FST and FSTL3; these interactions prevent activin A interaction to its type II receptor. Activin A interacts with ACVR2A. Activin A interacts with BMPR2. Inhibin A interacts with ACVR1; this interaction creates a non-signaling complex (NSC) that inhibits ACVR1-mediated BMP signaling. Inhibin A interacts with ACVR2A.

It localises to the secreted. Inhibins/activins are involved in regulating a number of diverse functions such as hypothalamic and pituitary hormone secretion, gonadal hormone secretion, germ cell development and maturation, erythroid differentiation, insulin secretion, nerve cell survival, embryonic axial development or bone growth, depending on their subunit composition. In terms of biological role, activin A is a homodimer of INHBA that plays a role in several essential biological processes including embryonic development, stem cell maintenance and differentiation, haematopoiesis, cell proliferation and tissue fibrosis. Signals through type I (such as ACVR1B or ACVR1C) and type II receptors (such as ACVR2A, ACVR2B or BMPR2) which, upon ligand binding, phosphorylate SMAD2 and SMAD3 intracellular signaling mediators that form a complex with SMAD4, translocate to the nucleus and modulate gene expression. Can also activate alternative non-canonical intracellular signaling pathways including the p38 MAPK, extracellular signal-regulated kinases 1/2 (ERK1/2) and c-Jun N-terminal kinases (JNKs) to modulate cell migration and differentiation. Alternatively, promotes osteoblastic differentiation via ACVRL1-SMAD1/5/9 pathway. In addition, can engage the type I receptor ACVR1 to form an ACVR1-activin A-type II receptor non-signaling complex (NSC) that renders receptors unavailable for engagement with BMPs, hence resulting in an apparent inhibition of ACVR1-mediated BMP signaling. Functionally, inhibin A is a dimer of alpha/INHA and beta-A/INHBA that functions as a feedback regulator in the hypothalamic-pituitary-gonadal (HPG) axis. Inhibits the secretion of FSH from the anterior pituitary gland by acting on pituitary gonadotrope cells. Antagonizes activin A by binding to the proteoglycan, betaglycan, and forming a stable complex with and, thereby, sequestering type II activin receptors while excluding type I receptor. This chain is Inhibin beta A chain (INHBA), found in Bos taurus (Bovine).